A 757-amino-acid polypeptide reads, in one-letter code: LPS-assembly protein LptD (757 aa).

The N-terminal stretch at 1–21 (MRRLIPIAITGSLLWGAAVQA) is a signal peptide.

The protein belongs to the LptD family. Component of the lipopolysaccharide transport and assembly complex. Interacts with LptE and LptA.

The protein localises to the cell outer membrane. Functionally, together with LptE, is involved in the assembly of lipopolysaccharide (LPS) at the surface of the outer membrane. The protein is LPS-assembly protein LptD of Alkalilimnicola ehrlichii (strain ATCC BAA-1101 / DSM 17681 / MLHE-1).